Consider the following 248-residue polypeptide: Histone H1, gonadal (248 aa).

Disordered stretches follow at residues 1-46 (PGSP…PPVL) and 115-248 (AVAK…KARK). Over residues 9–39 (ASPRKSPRKSPKKSPRKASASPRRKAKRARA) the composition is skewed to basic residues. In terms of domain architecture, H15 spans 41-115 (THPPVLEMVQ…GASGRFRVGA (75 aa)). Residues 118 to 248 (KPKKAKKTSA…KRRSPKKARK (131 aa)) are compositionally biased toward basic residues.

It belongs to the histone H1/H5 family. As to expression, sperm.

Its subcellular location is the nucleus. The protein resides in the chromosome. Functionally, histones H1 are necessary for the condensation of nucleosome chains into higher-order structures. This is Histone H1, gonadal from Parechinus angulosus (Angulate sea urchin).